A 1383-amino-acid chain; its full sequence is Spike glycoprotein (1383 aa).

The signal sequence occupies residues 1-25 (MRSLIYFWLLLPVLPTLSLPQDVTR). The S1 stretch occupies residues 26 to 734 (CQSTTNFRRF…TRELPGFFYH (709 aa)). Residues 26-1324 (CQSTTNFRRF…NRVETYIKWP (1299 aa)) are Virion surface-facing. Residues 617-745 (FQFTKGELIT…NDGSNCTEPV (129 aa)) form an interaction with host ANPEP region. The S2 stretch occupies residues 735–1383 (SNDGSNCTEP…YEAFEKVHVQ (649 aa)). Positions 955 to 975 (IGGMALGGITAAAALPFSYAV) are fusion peptide. The tract at residues 969–1088 (LPFSYAVQAR…QVDRLITGRL (120 aa)) is heptad repeat 1 (HR1). 2 coiled-coil regions span residues 1036-1080 (QEVV…DVQV) and 1272-1314 (TYLN…LEWL). Positions 1240–1336 (PDYIDVNKTL…VWLIIVIVLI (97 aa)) are heptad repeat 2 (HR2). A helical transmembrane segment spans residues 1325-1344 (WWVWLIIVIVLIFVVSLLVF). Residues 1345–1383 (CCISTGCCGCCGCCGACFSGCCRGPRLQPYEAFEKVHVQ) lie on the Intravirion side of the membrane. The short motif at 1379–1383 (KVHVQ) is the KxHxx element.

It belongs to the alphacoronaviruses spike protein family. As to quaternary structure, homotrimer. During virus morphogenesis, found in a complex with M and HE proteins. Interacts with host ANPEP.

It is found in the virion membrane. Its subcellular location is the host endoplasmic reticulum-Golgi intermediate compartment membrane. Functionally, S1 region attaches the virion to the cell membrane by interacting with host ANPEP/aminopeptidase N, initiating the infection. Binding to the receptor probably induces conformational changes in the S glycoprotein unmasking the fusion peptide of S2 region and activating membranes fusion. S2 region belongs to the class I viral fusion protein. Under the current model, the protein has at least 3 conformational states: pre-fusion native state, pre-hairpin intermediate state, and post-fusion hairpin state. During viral and target cell membrane fusion, the coiled coil regions (heptad repeats) regions assume a trimer-of-hairpins structure, positioning the fusion peptide in close proximity to the C-terminal region of the ectodomain. The formation of this structure appears to drive apposition and subsequent fusion of viral and target cell membranes. In Porcine epidemic diarrhea virus (strain CV777) (PEDV), this protein is Spike glycoprotein.